The following is a 326-amino-acid chain: GTPase Obg (326 aa).

The 159-residue stretch at 1-159 (MKFVDSAKIY…LEIELELKLM (159 aa)) folds into the Obg domain. The interval 119-138 (EGGKGGKGNPHFASSTRQAP) is disordered. One can recognise an OBG-type G domain in the interval 160 to 323 (ADVGLVGFPN…LKDELWSRVK (164 aa)). GTP contacts are provided by residues 166-173 (GFPNAGKS), 191-195 (FTTLV), 213-216 (DIPG), 280-283 (TKMD), and 304-306 (SSV). Ser173 and Thr193 together coordinate Mg(2+).

The protein belongs to the TRAFAC class OBG-HflX-like GTPase superfamily. OBG GTPase family. Monomer. The cofactor is Mg(2+).

The protein resides in the cytoplasm. An essential GTPase which binds GTP, GDP and possibly (p)ppGpp with moderate affinity, with high nucleotide exchange rates and a fairly low GTP hydrolysis rate. Plays a role in control of the cell cycle, stress response, ribosome biogenesis and in those bacteria that undergo differentiation, in morphogenesis control. In Chlorobium phaeobacteroides (strain BS1), this protein is GTPase Obg.